A 123-amino-acid chain; its full sequence is Protein Wnt-3a (123 aa).

Serine 1 carries the O-palmitoleoyl serine lipid modification. Cysteine 89 and cysteine 104 form a disulfide bridge. A glycan (N-linked (GlcNAc...) asparagine) is linked at asparagine 90.

It belongs to the Wnt family. In terms of processing, disulfide bonds have critical and distinct roles in secretion and activity. Loss of each conserved cysteine results in high molecular weight oxidized Wnt oligomers, which are formed through inter-Wnt disulfide bonding. Post-translationally, palmitoleoylation is required for efficient binding to frizzled receptors. Depalmitoleoylation leads to Wnt signaling pathway inhibition.

The protein resides in the secreted. Its subcellular location is the extracellular space. It localises to the extracellular matrix. Its function is as follows. Ligand for members of the frizzled family of seven transmembrane receptors. Functions in the canonical Wnt signaling pathway that results in activation of transcription factors of the TCF/LEF family. Required for normal embryonic mesoderm development and formation of caudal somites. Required for normal morphogenesis of the developing neural tube. The sequence is that of Protein Wnt-3a (WNT-3A) from Pituophis melanoleucus (Pine snake).